Reading from the N-terminus, the 149-residue chain is 3-dehydroquinate dehydratase (149 aa).

Catalysis depends on Tyr23, which acts as the Proton acceptor. Asn74, His80, and Asp87 together coordinate substrate. Catalysis depends on His100, which acts as the Proton donor. Substrate is bound by residues Leu101 to Ser102 and Arg111.

The protein belongs to the type-II 3-dehydroquinase family. Homododecamer.

The enzyme catalyses 3-dehydroquinate = 3-dehydroshikimate + H2O. Its pathway is metabolic intermediate biosynthesis; chorismate biosynthesis; chorismate from D-erythrose 4-phosphate and phosphoenolpyruvate: step 3/7. In terms of biological role, catalyzes a trans-dehydration via an enolate intermediate. This Ruegeria pomeroyi (strain ATCC 700808 / DSM 15171 / DSS-3) (Silicibacter pomeroyi) protein is 3-dehydroquinate dehydratase.